Consider the following 344-residue polypeptide: Anthranilate phosphoribosyltransferase (344 aa).

5-phospho-alpha-D-ribose 1-diphosphate-binding positions include G80, 83–84, T88, 90–93, 108–116, and S120; these read GD, NVST, and KHGNRSVSS. G80 lines the anthranilate pocket. Mg(2+) is bound at residue S92. Anthranilate is bound at residue N111. R166 lines the anthranilate pocket. The Mg(2+) site is built by D225 and E226.

This sequence belongs to the anthranilate phosphoribosyltransferase family. As to quaternary structure, homodimer. Requires Mg(2+) as cofactor.

The catalysed reaction is N-(5-phospho-beta-D-ribosyl)anthranilate + diphosphate = 5-phospho-alpha-D-ribose 1-diphosphate + anthranilate. It functions in the pathway amino-acid biosynthesis; L-tryptophan biosynthesis; L-tryptophan from chorismate: step 2/5. Functionally, catalyzes the transfer of the phosphoribosyl group of 5-phosphorylribose-1-pyrophosphate (PRPP) to anthranilate to yield N-(5'-phosphoribosyl)-anthranilate (PRA). The polypeptide is Anthranilate phosphoribosyltransferase (Legionella pneumophila (strain Lens)).